Consider the following 222-residue polypeptide: Probable nicotinate-nucleotide adenylyltransferase (222 aa).

This sequence belongs to the NadD family.

The enzyme catalyses nicotinate beta-D-ribonucleotide + ATP + H(+) = deamido-NAD(+) + diphosphate. Its pathway is cofactor biosynthesis; NAD(+) biosynthesis; deamido-NAD(+) from nicotinate D-ribonucleotide: step 1/1. Its function is as follows. Catalyzes the reversible adenylation of nicotinate mononucleotide (NaMN) to nicotinic acid adenine dinucleotide (NaAD). This is Probable nicotinate-nucleotide adenylyltransferase from Pseudomonas syringae pv. tomato (strain ATCC BAA-871 / DC3000).